We begin with the raw amino-acid sequence, 393 residues long: CCA-adding enzyme (393 aa).

Residues G27 and R30 each contribute to the ATP site. Positions 27 and 30 each coordinate CTP. Mg(2+) contacts are provided by D40 and D42. Residues R111, D154, R157, R160, and R163 each contribute to the ATP site. CTP contacts are provided by R111, D154, R157, R160, and R163.

The protein belongs to the tRNA nucleotidyltransferase/poly(A) polymerase family. Bacterial CCA-adding enzyme type 3 subfamily. As to quaternary structure, homodimer. It depends on Mg(2+) as a cofactor.

It carries out the reaction a tRNA precursor + 2 CTP + ATP = a tRNA with a 3' CCA end + 3 diphosphate. It catalyses the reaction a tRNA with a 3' CCA end + 2 CTP + ATP = a tRNA with a 3' CCACCA end + 3 diphosphate. Functionally, catalyzes the addition and repair of the essential 3'-terminal CCA sequence in tRNAs without using a nucleic acid template. Adds these three nucleotides in the order of C, C, and A to the tRNA nucleotide-73, using CTP and ATP as substrates and producing inorganic pyrophosphate. tRNA 3'-terminal CCA addition is required both for tRNA processing and repair. Also involved in tRNA surveillance by mediating tandem CCA addition to generate a CCACCA at the 3' terminus of unstable tRNAs. While stable tRNAs receive only 3'-terminal CCA, unstable tRNAs are marked with CCACCA and rapidly degraded. This is CCA-adding enzyme from Listeria innocua serovar 6a (strain ATCC BAA-680 / CLIP 11262).